A 297-amino-acid chain; its full sequence is 4,5-DOPA dioxygenase extradiol-like protein (297 aa).

4 residues coordinate Zn(2+): H30, H82, H205, and H263.

Belongs to the DODA-type extradiol aromatic ring-opening dioxygenase family. Requires Zn(2+) as cofactor.

It is found in the cytoplasm. Its subcellular location is the nucleus. In terms of biological role, may be involved in the metabolism of aromatic compounds. The chain is 4,5-DOPA dioxygenase extradiol-like protein from Schizosaccharomyces pombe (strain 972 / ATCC 24843) (Fission yeast).